We begin with the raw amino-acid sequence, 288 residues long: NAD kinase (288 aa).

The Proton acceptor role is filled by Asp-68. Residues 68-69, 142-143, Arg-153, Asp-172, and Gln-242 each bind NAD(+); these read DG and ND.

This sequence belongs to the NAD kinase family. It depends on a divalent metal cation as a cofactor.

It is found in the cytoplasm. The catalysed reaction is NAD(+) + ATP = ADP + NADP(+) + H(+). Its function is as follows. Involved in the regulation of the intracellular balance of NAD and NADP, and is a key enzyme in the biosynthesis of NADP. Catalyzes specifically the phosphorylation on 2'-hydroxyl of the adenosine moiety of NAD to yield NADP. The polypeptide is NAD kinase (Desulforamulus reducens (strain ATCC BAA-1160 / DSM 100696 / MI-1) (Desulfotomaculum reducens)).